Consider the following 346-residue polypeptide: Uroporphyrinogen decarboxylase (346 aa).

Substrate contacts are provided by residues 26–30 (RQAGR), aspartate 76, tyrosine 153, serine 208, and histidine 323.

The protein belongs to the uroporphyrinogen decarboxylase family. As to quaternary structure, homodimer.

The protein localises to the cytoplasm. It catalyses the reaction uroporphyrinogen III + 4 H(+) = coproporphyrinogen III + 4 CO2. It functions in the pathway porphyrin-containing compound metabolism; protoporphyrin-IX biosynthesis; coproporphyrinogen-III from 5-aminolevulinate: step 4/4. Its function is as follows. Catalyzes the decarboxylation of four acetate groups of uroporphyrinogen-III to yield coproporphyrinogen-III. The protein is Uroporphyrinogen decarboxylase of Prochlorococcus marinus (strain MIT 9312).